A 366-amino-acid polypeptide reads, in one-letter code: MSHNTFGHLFRVTTWGESHGVALGCVIDGCPPGITFTLAEIQSYLDKRRPGQSRYTTQRRELDQVEILSGVIVQDDGATLVTTGTPISLLIRNTDQRSKDYGSIVHQYRPGHADYTYDVKYGIRDFQGGGRASARETAARVAAGALARKIVPGLIVRGALIAIGPHNINRDRWDWLEVENNPFFTPDAEMVPVFSDYIDTVRKNGSSVGALVEIVAENVPAGLGAPIYAKLDQDIASSLMSINAVKGVEIGDGFAAACLTGEENADEMRMGSDGKPVFLSNHAGGILGGISSGQPIVARFAVKPTPSILTSRRSIDVDGNDVNVITKGRHDPCVGIRAVPVGEAMIACAIADHYLRHRGQVGRFER.

NADP(+) is bound by residues Arg-48 and Arg-54. Residues 131 to 133, 243 to 244, Gly-288, 303 to 307, and Arg-329 contribute to the FMN site; these read RAS, NA, and KPTPS.

Belongs to the chorismate synthase family. Homotetramer. FMNH2 serves as cofactor.

The enzyme catalyses 5-O-(1-carboxyvinyl)-3-phosphoshikimate = chorismate + phosphate. It functions in the pathway metabolic intermediate biosynthesis; chorismate biosynthesis; chorismate from D-erythrose 4-phosphate and phosphoenolpyruvate: step 7/7. In terms of biological role, catalyzes the anti-1,4-elimination of the C-3 phosphate and the C-6 proR hydrogen from 5-enolpyruvylshikimate-3-phosphate (EPSP) to yield chorismate, which is the branch point compound that serves as the starting substrate for the three terminal pathways of aromatic amino acid biosynthesis. This reaction introduces a second double bond into the aromatic ring system. The chain is Chorismate synthase from Bartonella quintana (strain Toulouse) (Rochalimaea quintana).